The chain runs to 815 residues: Phosphatidylinositol 4-phosphate 5-kinase 9 (815 aa).

MORN repeat units lie at residues 58 to 80 (YSGS…DGCV), 81 to 103 (YDGE…SGAS), 104 to 126 (YDGE…NKLT), 127 to 149 (YKGR…NGDV), 150 to 172 (FEGS…NKNV), 173 to 195 (YLGD…TGDS), 196 to 218 (YEGS…DGGC), and 219 to 240 (YVGT…AGTR). Residues 391–809 (GHRSYDLMLS…RFLEFIKKVF (419 aa)) enclose the PIPK domain. Residues 769–790 (YNMTKKIEHAYKSLHFDSLSIS) are activation loop.

Interacts with CINV1. Widely expressed.

The protein localises to the membrane. Its subcellular location is the nucleus. The enzyme catalyses a 1,2-diacyl-sn-glycero-3-phospho-(1D-myo-inositol 4-phosphate) + ATP = a 1,2-diacyl-sn-glycero-3-phospho-(1D-myo-inositol-4,5-bisphosphate) + ADP + H(+). Functionally, plays a role in sugar-mediated root development. Interaction with CINV1 induces repression of CINV1 activity and negative regulation of sugar-mediated root cell elongation. This Arabidopsis thaliana (Mouse-ear cress) protein is Phosphatidylinositol 4-phosphate 5-kinase 9 (PIP5K9).